A 146-amino-acid polypeptide reads, in one-letter code: MIDVMQIQEILPHRYPFLLVDKITELKVKEVVLGYKNISISDHVFMGHFPGHPIYPGVLILEGMAQTGGVLAFESMEDKVDPKSKVVYFTGIDGAKFRNPVRPGDRLDYEMSVVKNRGNMWIFKGQAFVDGNLVAEAELKAMIVDK.

The active site involves His-48.

It belongs to the thioester dehydratase family. FabZ subfamily.

It is found in the cytoplasm. The catalysed reaction is a (3R)-hydroxyacyl-[ACP] = a (2E)-enoyl-[ACP] + H2O. In terms of biological role, involved in unsaturated fatty acids biosynthesis. Catalyzes the dehydration of short chain beta-hydroxyacyl-ACPs and long chain saturated and unsaturated beta-hydroxyacyl-ACPs. The chain is 3-hydroxyacyl-[acyl-carrier-protein] dehydratase FabZ from Campylobacter jejuni subsp. jejuni serotype O:6 (strain 81116 / NCTC 11828).